The sequence spans 179 residues: Cytochrome b6-f complex iron-sulfur subunit (179 aa).

Residues 21–43 traverse the membrane as a helical segment; that stretch reads LLTFGTVTGVALGALYPVVKYFI. The region spanning 61–162 is the Rieske domain; sequence GNDVSLSKFL…ANTVDDKIIL (102 aa). [2Fe-2S] cluster contacts are provided by Cys108, His110, Cys126, and His129. Cys113 and Cys128 are disulfide-bonded.

Belongs to the Rieske iron-sulfur protein family. As to quaternary structure, the 4 large subunits of the cytochrome b6-f complex are cytochrome b6, subunit IV (17 kDa polypeptide, PetD), cytochrome f and the Rieske protein, while the 4 small subunits are PetG, PetL, PetM and PetN. The complex functions as a dimer. [2Fe-2S] cluster serves as cofactor.

The protein localises to the cellular thylakoid membrane. The enzyme catalyses 2 oxidized [plastocyanin] + a plastoquinol + 2 H(+)(in) = 2 reduced [plastocyanin] + a plastoquinone + 4 H(+)(out). Functionally, component of the cytochrome b6-f complex, which mediates electron transfer between photosystem II (PSII) and photosystem I (PSI), cyclic electron flow around PSI, and state transitions. This is Cytochrome b6-f complex iron-sulfur subunit from Desmonostoc sp. (strain PCC 7906) (Nostoc sp. (strain PCC 7906)).